A 91-amino-acid polypeptide reads, in one-letter code: Sec-independent protein translocase protein TatA (91 aa).

Residues 1–21 (MGIFDWKHWIVILIVVVLVFG) traverse the membrane as a helical segment. The segment at 41 to 91 (KAMNDDDKPAEQPAPQPQQAQPAPQGSPLNQPHTIDAQAHKVDEPIRKDQV) is disordered. A compositionally biased stretch (low complexity) spans 51-64 (EQPAPQPQQAQPAP). The segment covering 78–91 (QAHKVDEPIRKDQV) has biased composition (basic and acidic residues).

This sequence belongs to the TatA/E family. As to quaternary structure, the Tat system comprises two distinct complexes: a TatABC complex, containing multiple copies of TatA, TatB and TatC subunits, and a separate TatA complex, containing only TatA subunits. Substrates initially bind to the TatABC complex, which probably triggers association of the separate TatA complex to form the active translocon.

The protein localises to the cell inner membrane. Functionally, part of the twin-arginine translocation (Tat) system that transports large folded proteins containing a characteristic twin-arginine motif in their signal peptide across membranes. TatA could form the protein-conducting channel of the Tat system. This is Sec-independent protein translocase protein TatA from Pseudomonas syringae pv. syringae (strain B728a).